Reading from the N-terminus, the 556-residue chain is Polyphenol oxidase 2 (556 aa).

6 residues coordinate Cu cation: His-57, His-81, His-90, His-250, His-254, and His-282. Positions 79 to 81 (CTH) form a cross-link, 2'-(S-cysteinyl)-histidine (Cys-His). Residue His-254 coordinates substrate. Positions 379–556 (SKPSSGARNT…FDDVAVHVIN (178 aa)) are cleaved as a propeptide — removed in mature form.

This sequence belongs to the tyrosinase family. In terms of assembly, heterotetramer. Cu(2+) serves as cofactor. In terms of processing, the C-ter is probably cleaved after Gly-378 since the mature active protein is smaller than the protein encoded by the gene.

The catalysed reaction is 2 L-dopa + O2 = 2 L-dopaquinone + 2 H2O. The enzyme catalyses L-tyrosine + O2 = L-dopaquinone + H2O. Functionally, copper-containing oxidase that catalyzes both the o-hydroxylation of monophenols and the subsequent oxidation of the resulting o-diphenols into reactive o-quinones, which evolve spontaneously to produce intermediates, which associate in dark brown pigments. Involved in the initial step of melanin synthesis. Melanins constitute a mechanism of defense and resistance to stress such as UV radiations, free radicals, gamma rays, dehydratation and extreme temperatures, and contribute to the fungal cell-wall resistance against hydrolytic enzymes in avoiding cellular lysis. Fungal pigments are also involved in the formation and stability of spores. The sequence is that of Polyphenol oxidase 2 (PPO2) from Agaricus bisporus (White button mushroom).